Here is a 251-residue protein sequence, read N- to C-terminus: CDP-diacylglycerol pyrophosphatase (251 aa).

A helical membrane pass occupies residues 4–24; the sequence is AGLLFLVMIVIAVVAAGIGYW.

It belongs to the Cdh family.

It localises to the cell inner membrane. The catalysed reaction is a CDP-1,2-diacyl-sn-glycerol + H2O = a 1,2-diacyl-sn-glycero-3-phosphate + CMP + 2 H(+). It participates in phospholipid metabolism; CDP-diacylglycerol degradation; phosphatidate from CDP-diacylglycerol: step 1/1. This chain is CDP-diacylglycerol pyrophosphatase, found in Shigella boydii serotype 4 (strain Sb227).